Consider the following 203-residue polypeptide: Nucleoside triphosphate pyrophosphatase (203 aa).

Asp78 acts as the Proton acceptor in catalysis.

It belongs to the Maf family. It depends on a divalent metal cation as a cofactor.

The protein localises to the cytoplasm. It carries out the reaction a ribonucleoside 5'-triphosphate + H2O = a ribonucleoside 5'-phosphate + diphosphate + H(+). It catalyses the reaction a 2'-deoxyribonucleoside 5'-triphosphate + H2O = a 2'-deoxyribonucleoside 5'-phosphate + diphosphate + H(+). In terms of biological role, nucleoside triphosphate pyrophosphatase. May have a dual role in cell division arrest and in preventing the incorporation of modified nucleotides into cellular nucleic acids. This Prochlorococcus marinus (strain AS9601) protein is Nucleoside triphosphate pyrophosphatase.